The sequence spans 500 residues: Protein ASPARTIC PROTEASE IN GUARD CELL 1 (500 aa).

Positions methionine 1–alanine 24 are cleaved as a signal peptide. In terms of domain architecture, Peptidase A1 spans tyrosine 162–serine 496. The active site involves aspartate 180. 6 disulfide bridges follow: cysteine 190–cysteine 193, cysteine 196–cysteine 271, cysteine 217–cysteine 235, cysteine 222–cysteine 230, cysteine 307–cysteine 500, and cysteine 419–cysteine 461. Residue aspartate 379 is part of the active site.

It belongs to the peptidase A1 family. As to expression, expressed in young seedlings, leaves, guard-cells, stems, flowers and siliques, but not in roots or mesophyll cells.

The protein resides in the endoplasmic reticulum. Inhibited by pepstatin A. Functionally, aspartic protease involved in drought avoidance through abscisic acid signaling. This is Protein ASPARTIC PROTEASE IN GUARD CELL 1 (ASPG1) from Arabidopsis thaliana (Mouse-ear cress).